A 238-amino-acid polypeptide reads, in one-letter code: MLVIPAIDLIGGEVVRLEKGDFARKTVYARDPAEKAAELVRDGASLIHVVDLDGAKAGWPVNLDAVRAICAVPGAEVELGGGLRSLPDIEKVLELGVRYVVLGTAAVERLDLVRQACARFPGRVRSGIDARNGEVKIAGWLEGTGLGAAEVARRVKEAGVGLVEYTDVGRDGMFTGVDAEGAARLQAEAGVQVVASGGVAGLDDVRACRAAGLAGVIVGKALYEGRIALAEAVRAAAE.

Aspartate 8 functions as the Proton acceptor in the catalytic mechanism. The Proton donor role is filled by aspartate 129.

The protein belongs to the HisA/HisF family.

It is found in the cytoplasm. The enzyme catalyses 1-(5-phospho-beta-D-ribosyl)-5-[(5-phospho-beta-D-ribosylamino)methylideneamino]imidazole-4-carboxamide = 5-[(5-phospho-1-deoxy-D-ribulos-1-ylimino)methylamino]-1-(5-phospho-beta-D-ribosyl)imidazole-4-carboxamide. It participates in amino-acid biosynthesis; L-histidine biosynthesis; L-histidine from 5-phospho-alpha-D-ribose 1-diphosphate: step 4/9. This is 1-(5-phosphoribosyl)-5-[(5-phosphoribosylamino)methylideneamino] imidazole-4-carboxamide isomerase from Anaeromyxobacter dehalogenans (strain 2CP-1 / ATCC BAA-258).